A 164-amino-acid polypeptide reads, in one-letter code: Peroxynitrite isomerase 2 (164 aa).

A GXWXGXG motif is present at residues 17–23 (GSWAGRG). His155 serves as a coordination point for heme b.

It belongs to the nitrobindin family. Homodimer. Requires heme b as cofactor.

It catalyses the reaction peroxynitrite = nitrate. It functions in the pathway nitrogen metabolism. In terms of biological role, heme-binding protein able to scavenge peroxynitrite and to protect free L-tyrosine against peroxynitrite-mediated nitration, by acting as a peroxynitrite isomerase that converts peroxynitrite to nitrate. Therefore, this protein likely plays a role in peroxynitrite sensing and in the detoxification of reactive nitrogen and oxygen species (RNS and ROS, respectively). Is able to bind nitric oxide (NO) in vitro, but may act as a sensor of peroxynitrite levels in vivo. This is Peroxynitrite isomerase 2 from Mycobacterium bovis (strain BCG / Pasteur 1173P2).